Consider the following 796-residue polypeptide: Protein translocase subunit SecA 2 (796 aa).

Residues Gln-84, 102–106 (GEGKT), and Asp-496 each bind ATP.

The protein belongs to the SecA family. In terms of assembly, monomer and homodimer (Potential). Part of the accessory SecA2/SecY2 protein translocation apparatus required to export cell wall protein SraP.

It is found in the cell membrane. The protein localises to the cytoplasm. The enzyme catalyses ATP + H2O + cellular proteinSide 1 = ADP + phosphate + cellular proteinSide 2.. Part of the accessory SecA2/SecY2 system specifically required to export SraP, a serine-rich repeat cell wall protein encoded upstream in the same operon. This Staphylococcus aureus (strain NCTC 8325 / PS 47) protein is Protein translocase subunit SecA 2.